Consider the following 383-residue polypeptide: Lipid-A-disaccharide synthase (383 aa).

It belongs to the LpxB family.

The enzyme catalyses a lipid X + a UDP-2-N,3-O-bis[(3R)-3-hydroxyacyl]-alpha-D-glucosamine = a lipid A disaccharide + UDP + H(+). The protein operates within bacterial outer membrane biogenesis; LPS lipid A biosynthesis. In terms of biological role, condensation of UDP-2,3-diacylglucosamine and 2,3-diacylglucosamine-1-phosphate to form lipid A disaccharide, a precursor of lipid A, a phosphorylated glycolipid that anchors the lipopolysaccharide to the outer membrane of the cell. The protein is Lipid-A-disaccharide synthase of Aliivibrio fischeri (strain ATCC 700601 / ES114) (Vibrio fischeri).